The following is a 199-amino-acid chain: MQESKYQELQKQAEKSVKESMTLFQDWPNKGVGFQDISNLFLCYDKFSDVLDYYEHRFSDVDLVVGLEARGFILGTAFAQRMKLPMMMIRKKGKLPGPCFRESYKKEYGTDEFEVQEKALSKVVVKPSKKYHVLIMDDILAPGGTMAASIELTKKVLINNGIKDFKISTSLISSIKVLNGKEKIYEKYNDVSVDIIIEM.

It belongs to the purine/pyrimidine phosphoribosyltransferase family. In terms of assembly, homodimer.

It is found in the cytoplasm. The catalysed reaction is AMP + diphosphate = 5-phospho-alpha-D-ribose 1-diphosphate + adenine. It participates in purine metabolism; AMP biosynthesis via salvage pathway; AMP from adenine: step 1/1. In terms of biological role, catalyzes a salvage reaction resulting in the formation of AMP, that is energically less costly than de novo synthesis. This is Probable adenine phosphoribosyltransferase (aprt) from Dictyostelium discoideum (Social amoeba).